A 141-amino-acid polypeptide reads, in one-letter code: Large ribosomal subunit protein uL11 (141 aa).

The protein belongs to the universal ribosomal protein uL11 family. In terms of assembly, part of the ribosomal stalk of the 50S ribosomal subunit. Interacts with L10 and the large rRNA to form the base of the stalk. L10 forms an elongated spine to which L12 dimers bind in a sequential fashion forming a multimeric L10(L12)X complex. Post-translationally, one or more lysine residues are methylated.

In terms of biological role, forms part of the ribosomal stalk which helps the ribosome interact with GTP-bound translation factors. The sequence is that of Large ribosomal subunit protein uL11 from Prosthecochloris aestuarii (strain DSM 271 / SK 413).